The sequence spans 414 residues: Phospholipid-transporting ATPase accessory subunit LEM3 (414 aa).

The interval 1-50 (MVNFDLGQVGEVFRRKDKGAIVSGDNPEEEEDVDASEFEEDEVKPVRTKN) is required for localization to the plasma membrane. Residues 1-74 (MVNFDLGQVG…AINPVLTPRT (74 aa)) lie on the Cytoplasmic side of the membrane. The segment at 20-52 (AIVSGDNPEEEEDVDASEFEEDEVKPVRTKNRR) is disordered. Acidic residues predominate over residues 26-42 (NPEEEEDVDASEFEEDE). Ser-36 is modified (phosphoserine). The chain crosses the membrane as a helical span at residues 75–95 (VLPLYLLIAVVFVIVGGCILA). Residues 96–372 (QNSKVDEVTI…HGSHLGGRNP (277 aa)) are Extracellular-facing. 2 cysteine pairs are disulfide-bonded: Cys-110/Cys-159 and Cys-216/Cys-231. Asn-113 carries an N-linked (GlcNAc...) asparagine glycan. N-linked (GlcNAc...) asparagine glycans are attached at residues Asn-240, Asn-256, Asn-279, Asn-298, and Asn-332. Residues 373–393 (FLGIVYLIGGCICAAMALILL) form a helical membrane-spanning segment. At 394–414 (TFWLFGGRKIADASSLSWNMK) the chain is on the cytoplasmic side. The required for localization to the plasma membrane stretch occupies residues 400-414 (GRKIADASSLSWNMK).

Belongs to the CDC50/LEM3 family. As to quaternary structure, component of a flippase complex consisting of DNF1 or DNF2 and LEM3. Interacts with DNF1; the interaction is direct and required for their mutual export from the endoplasmic reticulum. Interacts with DNF2; the interaction is direct and required for their mutual export from the endoplasmic reticulum.

It is found in the cell membrane. Functionally, accessory component of a P4-ATPase flippase complex which catalyzes the hydrolysis of ATP coupled to the transport of glucosylceramide, phosphatidylcholine, phosphatidylethanolamine, and small amounts of phosphatidylserine from the lumenal to the cytosolic leaflet of the cell membrane and ensures the maintenance of asymmetric distribution of phospholipids. Contributes to substrate binding and specificity of the P4-ATPase catalytic subunit. The sequence is that of Phospholipid-transporting ATPase accessory subunit LEM3 from Saccharomyces cerevisiae (strain ATCC 204508 / S288c) (Baker's yeast).